Here is a 1462-residue protein sequence, read N- to C-terminus: Gag-Pro-Pol polyprotein (1462 aa).

Gly2 carries the N-myristoyl glycine; by host lipid modification. The interval 93–143 (QIPSHPAPPPPSSPTHDPPDSDPQIPPPYVEPTAPQVLPVMHPHGVPPTHR) is disordered. Position 105 is a phosphoserine; by host MAPK1 (Ser105). The short motif at 118-121 (PPPY) is the PPXY motif element. The PTAP/PSAP motif motif lies at 124–127 (PTAP). 2 consecutive CCHC-type zinc fingers follow at residues 355–372 (QPCFRCGKAGHWSRDCAQ) and 378–395 (GPCPLCQDPTHWKRDCPR). In terms of domain architecture, Peptidase A2 spans 476–554 (IEALLDTGAD…NNWAIIGRDA (79 aa)). Catalysis depends on Asp481, which acts as the For protease activity; shared with dimeric partner. Residues 614-804 (LEAGHIEPYT…GTIKFLGQII (191 aa)) enclose the Reverse transcriptase domain. Positions 680, 755, 756, 1040, 1074, 1096, 1157, 1230, and 1287 each coordinate Mg(2+). Residues 1031-1165 (INTAPCLFSD…TDALLITPIL (135 aa)) enclose the RNase H type-1 domain. In terms of domain architecture, Integrase catalytic spans 1219 to 1388 (RGLLPNHIWQ…QPIPETHSLI (170 aa)). Residues 1393 to 1443 (HWYYFKLPGLNSRQWKGPQEALQEAAGAALIPVSANSAQWIPWRLLKQAAC) constitute a DNA-binding region (integrase-type).

In terms of assembly, homodimer; the homodimers are part of the immature particles. Interacts with human TSG101 and NEDD4; these interactions are essential for budding and release of viral particles. As to quaternary structure, homodimer; further assembles as homohexamers. Mg(2+) serves as cofactor. In terms of processing, phosphorylation of the matrix protein p19 by MAPK1 seems to play a role in budding. Post-translationally, myristoylated. Myristoylation of the matrix (MA) domain mediates the transport and binding of Gag polyproteins to the host plasma membrane and is required for the assembly of viral particles. Specific enzymatic cleavages by the viral protease yield mature proteins. The polyprotein is cleaved during and after budding, this process is termed maturation. The protease is autoproteolytically processed at its N- and C-termini.

Its subcellular location is the virion. The catalysed reaction is Endonucleolytic cleavage to 5'-phosphomonoester.. It catalyses the reaction DNA(n) + a 2'-deoxyribonucleoside 5'-triphosphate = DNA(n+1) + diphosphate. Its function is as follows. The matrix domain targets Gag, Gag-Pro and Gag-Pro-Pol polyproteins to the plasma membrane via a multipartite membrane binding signal, that includes its myristoylated N-terminus. In terms of biological role, matrix protein. Forms the spherical core of the virus that encapsulates the genomic RNA-nucleocapsid complex. Functionally, binds strongly to viral nucleic acids and promote their aggregation. Also destabilizes the nucleic acids duplexes via highly structured zinc-binding motifs. Its function is as follows. The aspartyl protease mediates proteolytic cleavages of Gag and Gag-Pol polyproteins during or shortly after the release of the virion from the plasma membrane. Cleavages take place as an ordered, step-wise cascade to yield mature proteins. This process is called maturation. Displays maximal activity during the budding process just prior to particle release from the cell (Potential). Cleaves the translation initiation factor eIF4G leading to the inhibition of host cap-dependent translation. In terms of biological role, RT is a multifunctional enzyme that converts the viral RNA genome into dsDNA in the cytoplasm, shortly after virus entry into the cell. This enzyme displays a DNA polymerase activity that can copy either DNA or RNA templates, and a ribonuclease H (RNase H) activity that cleaves the RNA strand of RNA-DNA heteroduplexes in a partially processive 3' to 5'-endonucleasic mode. Conversion of viral genomic RNA into dsDNA requires many steps. A tRNA-Pro binds to the primer-binding site (PBS) situated at the 5'-end of the viral RNA. RT uses the 3' end of the tRNA primer to perform a short round of RNA-dependent minus-strand DNA synthesis. The reading proceeds through the U5 region and ends after the repeated (R) region which is present at both ends of viral RNA. The portion of the RNA-DNA heteroduplex is digested by the RNase H, resulting in a ssDNA product attached to the tRNA primer. This ssDNA/tRNA hybridizes with the identical R region situated at the 3' end of viral RNA. This template exchange, known as minus-strand DNA strong stop transfer, can be either intra- or intermolecular. RT uses the 3' end of this newly synthesized short ssDNA to perform the RNA-dependent minus-strand DNA synthesis of the whole template. RNase H digests the RNA template except for a polypurine tract (PPT) situated at the 5' end of the genome. It is not clear if both polymerase and RNase H activities are simultaneous. RNase H probably can proceed both in a polymerase-dependent (RNA cut into small fragments by the same RT performing DNA synthesis) and a polymerase-independent mode (cleavage of remaining RNA fragments by free RTs). Secondly, RT performs DNA-directed plus-strand DNA synthesis using the PPT that has not been removed by RNase H as primer. PPT and tRNA primers are then removed by RNase H. The 3' and 5' ssDNA PBS regions hybridize to form a circular dsDNA intermediate. Strand displacement synthesis by RT to the PBS and PPT ends produces a blunt ended, linear dsDNA copy of the viral genome that includes long terminal repeats (LTRs) at both ends. Catalyzes viral DNA integration into the host chromosome, by performing a series of DNA cutting and joining reactions. In Homo sapiens (Human), this protein is Gag-Pro-Pol polyprotein (gag-pro-pol).